The sequence spans 700 residues: Elongation factor G (700 aa).

The 277-residue stretch at 10–286 (NKVRNIGIMA…AVIDYLPNPL (277 aa)) folds into the tr-type G domain. GTP contacts are provided by residues 19 to 26 (AHIDAGKT), 83 to 87 (DTPGH), and 137 to 140 (NKMD).

The protein belongs to the TRAFAC class translation factor GTPase superfamily. Classic translation factor GTPase family. EF-G/EF-2 subfamily.

The protein localises to the cytoplasm. In terms of biological role, catalyzes the GTP-dependent ribosomal translocation step during translation elongation. During this step, the ribosome changes from the pre-translocational (PRE) to the post-translocational (POST) state as the newly formed A-site-bound peptidyl-tRNA and P-site-bound deacylated tRNA move to the P and E sites, respectively. Catalyzes the coordinated movement of the two tRNA molecules, the mRNA and conformational changes in the ribosome. The sequence is that of Elongation factor G from Rhodococcus erythropolis (strain PR4 / NBRC 100887).